The chain runs to 331 residues: Adenosine deaminase (331 aa).

Zn(2+) is bound by residues H12 and H14. Residues H14, D16, and G170 each coordinate substrate. Zn(2+) is bound at residue H197. E200 acts as the Proton donor in catalysis. D278 lines the Zn(2+) pocket.

Belongs to the metallo-dependent hydrolases superfamily. Adenosine and AMP deaminases family. Adenosine deaminase subfamily. Zn(2+) is required as a cofactor.

It catalyses the reaction adenosine + H2O + H(+) = inosine + NH4(+). The catalysed reaction is 2'-deoxyadenosine + H2O + H(+) = 2'-deoxyinosine + NH4(+). Functionally, catalyzes the hydrolytic deamination of adenosine and 2-deoxyadenosine. In Vibrio vulnificus (strain YJ016), this protein is Adenosine deaminase.